Reading from the N-terminus, the 400-residue chain is uncharacterized protein (400 aa).

It belongs to the mimivirus R640 family.

The protein resides in the virion. This is an uncharacterized protein from Acanthamoeba polyphaga (Amoeba).